A 507-amino-acid polypeptide reads, in one-letter code: Cell cycle serine/threonine-protein kinase hsk1 (507 aa).

Phosphoserine is present on Ser22. A Protein kinase domain is found at 68–433 (YRLIEKIGEG…AEEALDHDFL (366 aa)). ATP-binding positions include 74 to 82 (IGEGTFSSV) and Lys129. The active-site Proton acceptor is the Asp216. The residue at position 291 (Thr291) is a Phosphothreonine. Residues 475–507 (FKEQEETDEPTSLSKRKRSIDEILPNDALQDGA) form a disordered region. Position 493 is a phosphoserine (Ser493).

The protein belongs to the protein kinase superfamily. Ser/Thr protein kinase family. CDC7 subfamily. In terms of assembly, heterodimer with the regulatory subunit him1/dfp1. May form homooligomeric complexes. Interacts with mcm10. Post-translationally, autophosphorylated. Phosphorylated by cds1 in vitro.

It localises to the nucleus. It catalyses the reaction L-seryl-[protein] + ATP = O-phospho-L-seryl-[protein] + ADP + H(+). It carries out the reaction L-threonyl-[protein] + ATP = O-phospho-L-threonyl-[protein] + ADP + H(+). With respect to regulation, phosphorylation of exogenous substrates activated by Dfp1. In terms of biological role, required for G1/S transition. Plays a role in DNA replication checkpoint signaling through regulating rad3 and cds1. Involved in the maintenance of mitotic chromosome structures during S phase through regulating the function of rad21. Required for initiation of mitotic DNA replication through phosphorylating mcm2/cdc19. Required for genome integrity. This Schizosaccharomyces pombe (strain 972 / ATCC 24843) (Fission yeast) protein is Cell cycle serine/threonine-protein kinase hsk1 (hsk1).